Consider the following 211-residue polypeptide: RILP-like protein 2 (211 aa).

The tract at residues 1–32 (MEEPPVREEEEEEGEEDEERDEVGPEGALGKS) is disordered. The span at 8 to 21 (EEEEEEGEEDEERD) shows a compositional bias: acidic residues. The 83-residue stretch at 24 to 106 (GPEGALGKSP…RKEVEGLRRQ (83 aa)) folds into the RH1 domain. Residues 70–164 (RVLEMLEALV…VQEELQCYKS (95 aa)) are a coiled coil. S107 carries the post-translational modification Phosphoserine. Residues 130–201 (RPRFTLQELR…NKEEKTIIKK (72 aa)) enclose the RH2 domain. Residues 166–190 (LIPPREGPGGRREKDAVVTSAKNAG) form a disordered region.

The protein belongs to the RILPL family. In terms of assembly, homodimer. Interacts with RAC1. Interacts (via N-terminus) with MYO5A, the interaction is required for its role in dendrite formation. Interacts with RAB8A; interaction is dependent on the phosphorylation of RAB8A on 'Thr-72'. Interacts with RAB10 and RAB12; interaction is dependent on the phosphorylation of 'Thr-73' on RAB10 and 'Ser-105' on RAB12. Widely expressed. Expressed at higher level in lung.

The protein resides in the cytoplasm. It is found in the cytosol. Its subcellular location is the cytoskeleton. The protein localises to the microtubule organizing center. It localises to the centrosome. The protein resides in the cell projection. It is found in the cilium. Involved in cell shape and neuronal morphogenesis, positively regulating the establishment and maintenance of dendritic spines. Plays a role in cellular protein transport, including protein transport away from primary cilia. May function via activation of RAC1 and PAK1. The chain is RILP-like protein 2 (RILPL2) from Homo sapiens (Human).